A 230-amino-acid chain; its full sequence is Peptidyl-prolyl cis-trans isomerase Mip (230 aa).

A signal peptide spans M1–A21. Positions N142 to K230 constitute a PPIase FKBP-type domain.

Belongs to the FKBP-type PPIase family.

It localises to the secreted. The catalysed reaction is [protein]-peptidylproline (omega=180) = [protein]-peptidylproline (omega=0). In terms of biological role, may be an essential virulence factor associated with macrophage infectivity. Exhibits PPIase activity. The protein is Peptidyl-prolyl cis-trans isomerase Mip (mip) of Coxiella burnetii (strain RSA 493 / Nine Mile phase I).